The primary structure comprises 593 residues: Efflux pump FUB11 (593 aa).

A disordered region spans residues 1–45 (MAIDPQPSSPSLSSETIANDTIGNDNNVNEPSVEPKTQEHQHTVP). Residues 9–30 (SPSLSSETIANDTIGNDNNVNE) are compositionally biased toward polar residues. N-linked (GlcNAc...) asparagine glycosylation is present at Asn19. 12 helical membrane-spanning segments follow: residues 98-118 (WAFVLLQSLACLATTFASSAY), 135-155 (VATLGISLYVLGFTFGPLVWA), 167-187 (FFFTFMVATAFSAGAAGAGSI), 195-215 (FLTGSIGSAPLSNAPALIADM), 227-247 (MFSGAPFLGPAIGPIAGGFLG), 254-274 (WLHGLMAAFTGVTWIACTVFI), 337-357 (IYISIIYGTMYMCFAAFPIVF), 367-387 (IGGLAFTGIVIGVILSIISFA), 410-430 (LPPAIMGSLLIPIGLFWFAWT), 438-458 (IVPIIGTVFFAWGLVLVFMAL), 468-488 (IFAASIMAANSALRSLFGAAF), and 503-523 (WASSIPAFLALACVPFPFLFY). Residues 570-593 (THNSHASAAHSHGHRRSLSYTRSA) are disordered.

This sequence belongs to the major facilitator superfamily. DHA1 family. Polyamines/proton antiporter (TC 2.A.1.2.16) subfamily.

Its subcellular location is the cell membrane. Functionally, efflux pump involved in export of fusaric acid, a mycotoxin with low to moderate toxicity to animals and humans, but with high phytotoxic properties. Constitutes a self-protecting mechanism of the fungus against critical levels of FSA within the cell. This chain is Efflux pump FUB11, found in Gibberella moniliformis (strain M3125 / FGSC 7600) (Maize ear and stalk rot fungus).